A 212-amino-acid chain; its full sequence is MSTENTSTAVAEEIPNLLITPSAQEYLGDLLEKQNTPGIGVRIFVENPGTPRAECCMAYSAPDEVNPADYKQEYSDFPAYIDAPSIPYLLDAVIDYNKDRFGGQLTFRAPNSKVPRVGPDASIEERITYILQSEINPGLAGHGGNCALVEVQDDPENGLTAVLKFGGGCQGCSAIDVTLKQGVETTLRQQIPELQRVVDQTDHTQAEGAYFK.

Residues Cys-169 and Cys-172 each contribute to the [4Fe-4S] cluster site.

Belongs to the NfuA family. As to quaternary structure, homodimer. The cofactor is [4Fe-4S] cluster.

Involved in iron-sulfur cluster biogenesis. Binds a 4Fe-4S cluster, can transfer this cluster to apoproteins, and thereby intervenes in the maturation of Fe/S proteins. Could also act as a scaffold/chaperone for damaged Fe/S proteins. In Acinetobacter baylyi (strain ATCC 33305 / BD413 / ADP1), this protein is Fe/S biogenesis protein NfuA.